The primary structure comprises 114 residues: T cell receptor beta variable 5-1 (114 aa).

Positions 1–21 (MGSRLLCWVLLCLLGAGPVKA) are cleaved as a signal peptide. The region spanning 22-114 (GVTQTPRYLI…SALYLCASSL (93 aa)) is the Ig-like domain. Cys-42 and Cys-110 are joined by a disulfide. Asn-96 carries an N-linked (GlcNAc...) asparagine glycan.

As to quaternary structure, alpha-beta TR is a heterodimer composed of an alpha and beta chain; disulfide-linked. The alpha-beta TR is associated with the transmembrane signaling CD3 coreceptor proteins to form the TR-CD3 (TcR or TCR). The assembly of alpha-beta TR heterodimers with CD3 occurs in the endoplasmic reticulum where a single alpha-beta TR heterodimer associates with one CD3D-CD3E heterodimer, one CD3G-CD3E heterodimer and one CD247 homodimer forming a stable octameric structure. CD3D-CD3E and CD3G-CD3E heterodimers preferentially associate with TR alpha and TR beta chains, respectively. The association of the CD247 homodimer is the last step of TcR assembly in the endoplasmic reticulum and is required for transport to the cell surface.

Its subcellular location is the cell membrane. Functionally, v region of the variable domain of T cell receptor (TR) beta chain that participates in the antigen recognition. Alpha-beta T cell receptors are antigen specific receptors which are essential to the immune response and are present on the cell surface of T lymphocytes. Recognize peptide-major histocompatibility (MH) (pMH) complexes that are displayed by antigen presenting cells (APC), a prerequisite for efficient T cell adaptive immunity against pathogens. Binding of alpha-beta TR to pMH complex initiates TR-CD3 clustering on the cell surface and intracellular activation of LCK that phosphorylates the ITAM motifs of CD3G, CD3D, CD3E and CD247 enabling the recruitment of ZAP70. In turn ZAP70 phosphorylates LAT, which recruits numerous signaling molecules to form the LAT signalosome. The LAT signalosome propagates signal branching to three major signaling pathways, the calcium, the mitogen-activated protein kinase (MAPK) kinase and the nuclear factor NF-kappa-B (NF-kB) pathways, leading to the mobilization of transcription factors that are critical for gene expression and essential for T cell growth and differentiation. The T cell repertoire is generated in the thymus, by V-(D)-J rearrangement. This repertoire is then shaped by intrathymic selection events to generate a peripheral T cell pool of self-MH restricted, non-autoaggressive T cells. Post-thymic interaction of alpha-beta TR with the pMH complexes shapes TR structural and functional avidity. The sequence is that of T cell receptor beta variable 5-1 from Homo sapiens (Human).